A 377-amino-acid chain; its full sequence is Pyruvate dehydrogenase E1 component subunit alpha, mitochondrial (377 aa).

Residues 1-26 (MLSNFLKVNSKALGHIRTFASKSGEI) constitute a mitochondrion transit peptide. Residues H83, Y109, R110, G156, V158, D187, G188, A189, N216, and Y218 each contribute to the pyruvate site. Thiamine diphosphate contacts are provided by Y109, R110, G156, V158, D187, G188, A189, and N216. Residue D187 participates in Mg(2+) binding. The Mg(2+) site is built by N216 and Y218. H283 is a binding site for thiamine diphosphate.

In terms of assembly, tetramer of 2 alpha and 2 beta subunits. Thiamine diphosphate serves as cofactor. The cofactor is Mg(2+).

The protein localises to the mitochondrion matrix. The enzyme catalyses N(6)-[(R)-lipoyl]-L-lysyl-[protein] + pyruvate + H(+) = N(6)-[(R)-S(8)-acetyldihydrolipoyl]-L-lysyl-[protein] + CO2. E1 activity is regulated by phosphorylation (inactivation) and dephosphorylation (activation) of the alpha subunit. The pyruvate dehydrogenase complex catalyzes the overall conversion of pyruvate to acetyl-CoA and CO(2). It contains multiple copies of three enzymatic components: pyruvate dehydrogenase (E1), dihydrolipoamide acetyltransferase (E2) and lipoamide dehydrogenase (E3). The sequence is that of Pyruvate dehydrogenase E1 component subunit alpha, mitochondrial (pdhA) from Dictyostelium discoideum (Social amoeba).